A 390-amino-acid chain; its full sequence is MENGNSSSDNKSSHKPIRCKAAVSRKAGEPLVMEEIMVAPPQPFEVRIRIICTALCHSDVTFWKLQVPPACFPRILGHEAIGVVESVGENVKEVVEGDTVLPTFMPDCGDCVDCKSHKSNLCSKFPFKVSPWMPRYDNSSRFTDLNGETLFHFLNVSSFSEYTVLDVANVVKIDSSIPPSRACLLSCGVSTGVGAAWETAKVEKGSTVVIFGLGSIGLAVAEGARLCGASRIIGVDINPTKFQVGQKFGVTEFVNSMTCEKNRVSEVINEMTDGGADYCFECVGSSSLVQEAYACCRQGWGKTITLGVDKPGSQICLDSFDVLHHGKILMGSLFGGLKAKTHIPILLKRYLSNELELDKFVTHEMKFEEINDAFQLLLEGKCIRCVLWMG.

Positions 56, 58, 78, 108, 111, 114, 122, and 187 each coordinate Zn(2+). An alcohol contacts are provided by serine 58 and histidine 78. Serine 58 lines the NAD(+) pocket. NAD(+) contacts are provided by residues 212–217 (GLGSIG), aspartate 236, lysine 241, 306–308 (LGV), phenylalanine 334, and arginine 384.

This sequence belongs to the zinc-containing alcohol dehydrogenase family. Class-III subfamily. Homodimer. Zn(2+) serves as cofactor.

It is found in the cytoplasm. It carries out the reaction a primary alcohol + NAD(+) = an aldehyde + NADH + H(+). The catalysed reaction is a secondary alcohol + NAD(+) = a ketone + NADH + H(+). In Arabidopsis thaliana (Mouse-ear cress), this protein is Alcohol dehydrogenase-like 7.